A 124-amino-acid polypeptide reads, in one-letter code: Flagellar transcriptional regulator FlhD (124 aa).

Belongs to the FlhD family. Homodimer; disulfide-linked. Forms a heterohexamer composed of two FlhC and four FlhD subunits. Each FlhC binds a FlhD dimer, forming a heterotrimer, and a hexamer assembles by dimerization of two heterotrimers.

The protein localises to the cytoplasm. In terms of biological role, functions in complex with FlhC as a master transcriptional regulator that regulates transcription of several flagellar and non-flagellar operons by binding to their promoter region. Activates expression of class 2 flagellar genes, including fliA, which is a flagellum-specific sigma factor that turns on the class 3 genes. Also regulates genes whose products function in a variety of physiological pathways. This is Flagellar transcriptional regulator FlhD from Pectobacterium carotovorum (Erwinia carotovora).